A 146-amino-acid polypeptide reads, in one-letter code: Hemoglobin subunit beta (146 aa).

N-acetylvaline is present on V1. The Globin domain occupies 2–146; the sequence is HLTGEEKAAV…VANALAHKYH (145 aa). Position 12 is a phosphothreonine (T12). S44 is modified (phosphoserine). Residue K59 is modified to N6-acetyllysine. H63 contributes to the heme b binding site. Residue K82 is modified to N6-acetyllysine. A heme b-binding site is contributed by H92. S-nitrosocysteine is present on C93. K144 bears the N6-acetyllysine mark.

It belongs to the globin family. Heterotetramer of two alpha chains and two beta chains. Red blood cells.

Involved in oxygen transport from the lung to the various peripheral tissues. This is Hemoglobin subunit beta (HBB) from Lutra lutra (European river otter).